Consider the following 777-residue polypeptide: MKTYTYSKQDLSFIEQLSQAYCKDPFSYLGLHQAGDVSVIRVFLPEATTVKILSADGQILSEALKIDDSGLFVAQLSQQYSSLNYRLRVGYSLAEIDLEDPYRFTSSLLPMDNWLLAEGTHLRPYEILGAHLKTQEGVSGVHFSVWAPNARRVSVVGDFNYWDGRVNPMRFHAESGIWDIFLPNVEKGALYKFEILDSNGNIRLKSDPYAFASQFRPDTASVVTGLPEKIEVDAKLRHANEPDQPISIYEVHLGSWRRHLENNYWLNYEEIANELIPYVKDMGFTHIELLPITEYPFDGSWGYQPTGLYSPTSRFGSPDDLRTLIRKAHEAGINVILDWVVGHFPTDSHGLTEFDGSHLYEHQDPREGYHQDWNTLIFNYGRHEVFNYLSSNALYWTERFGIDGLRVDAVSSMIYRDYSRKDGEWIPNQYGGRENLEALDFLRRTNRMLKKEGHGAVVIAEESTSFAGITHSPTENGVGFDYKWNMGWMNDTLRYMSLDPIYRQYHHDWMTFGMMYQYSEKFVLPLSHDEVVHGKCSILGKMSGDCWQKFANLRAYYGYMWGYPGKKLLFMGNEFAQGREWNYNESLDWFLLGEQGGGWHKGVLNWVRDLNRTYQKYPALYQLDYDPAGFEWLVVDDWQQSVFAFERKAKNGESVIVVSNFTPVVRHNYRIGVRQDGTYTEILNSDAAYYEGSNVGNYGEIECEAIESHGKPFSIELSIPPLSTIFIACQPKPKEAVEAEQDIVKMAEVAMQKALKPTKKTVSVKAKAHKKAHKNKK.

The active-site Nucleophile is aspartate 408. Glutamate 461 acts as the Proton donor in catalysis.

The protein belongs to the glycosyl hydrolase 13 family. GlgB subfamily. As to quaternary structure, monomer.

It carries out the reaction Transfers a segment of a (1-&gt;4)-alpha-D-glucan chain to a primary hydroxy group in a similar glucan chain.. The protein operates within glycan biosynthesis; glycogen biosynthesis. Functionally, catalyzes the formation of the alpha-1,6-glucosidic linkages in glycogen by scission of a 1,4-alpha-linked oligosaccharide from growing alpha-1,4-glucan chains and the subsequent attachment of the oligosaccharide to the alpha-1,6 position. This Actinobacillus pleuropneumoniae serotype 3 (strain JL03) protein is 1,4-alpha-glucan branching enzyme GlgB.